A 169-amino-acid chain; its full sequence is MYNVGKIVNTHGLIGEIRVIATTDFPEERFQVGNTVYLFEKNSKKPEKLIIRSHRKHKNFDLLMFEGLTGIHQVERMKEGVLKIKETQQTDLEENEFYFHEIIGCTVVTTDGEELGEIIEILTPGANDVWVVKGADKKEKLIPYIADVVKEINTNDKKITIEVMEGLLD.

The PRC barrel domain occupies 94–167; that stretch reads ENEFYFHEII…KITIEVMEGL (74 aa).

This sequence belongs to the RimM family. In terms of assembly, binds ribosomal protein uS19.

It is found in the cytoplasm. An accessory protein needed during the final step in the assembly of 30S ribosomal subunit, possibly for assembly of the head region. Essential for efficient processing of 16S rRNA. May be needed both before and after RbfA during the maturation of 16S rRNA. It has affinity for free ribosomal 30S subunits but not for 70S ribosomes. The sequence is that of Ribosome maturation factor RimM from Listeria welshimeri serovar 6b (strain ATCC 35897 / DSM 20650 / CCUG 15529 / CIP 8149 / NCTC 11857 / SLCC 5334 / V8).